We begin with the raw amino-acid sequence, 332 residues long: uncharacterized protein (332 aa).

A disordered region spans residues 306–332; the sequence is EKNTSEVTEPKTGPSGTKDNYHLHSIF.

This is an uncharacterized protein from Homo sapiens (Human).